We begin with the raw amino-acid sequence, 265 residues long: 2-C-methyl-D-erythritol 4-phosphate cytidylyltransferase (265 aa).

Residues aspartate 231–arginine 241 are compositionally biased toward basic and acidic residues. The disordered stretch occupies residues aspartate 231–valine 265. Residues serine 253–valine 265 show a composition bias toward low complexity.

Belongs to the IspD/TarI cytidylyltransferase family. IspD subfamily.

The enzyme catalyses 2-C-methyl-D-erythritol 4-phosphate + CTP + H(+) = 4-CDP-2-C-methyl-D-erythritol + diphosphate. It functions in the pathway isoprenoid biosynthesis; isopentenyl diphosphate biosynthesis via DXP pathway; isopentenyl diphosphate from 1-deoxy-D-xylulose 5-phosphate: step 2/6. Functionally, catalyzes the formation of 4-diphosphocytidyl-2-C-methyl-D-erythritol from CTP and 2-C-methyl-D-erythritol 4-phosphate (MEP). This Xanthomonas campestris pv. campestris (strain 8004) protein is 2-C-methyl-D-erythritol 4-phosphate cytidylyltransferase.